The following is a 418-amino-acid chain: D-inositol 3-phosphate glycosyltransferase (418 aa).

His9 contributes to the 1D-myo-inositol 3-phosphate binding site. Residues 15-16 (QP) and Gly23 each bind UDP-N-acetyl-alpha-D-glucosamine. 1D-myo-inositol 3-phosphate is bound by residues 20–25 (DSGGMN), Lys78, Tyr110, Thr134, and Arg154. Residues Arg231, Lys236, and Arg294 each contribute to the UDP-N-acetyl-alpha-D-glucosamine site. Mg(2+) is bound by residues Tyr303, Arg304, and Ala306. 2 residues coordinate UDP-N-acetyl-alpha-D-glucosamine: Glu316 and Glu324. Thr330 serves as a coordination point for Mg(2+).

Belongs to the glycosyltransferase group 1 family. MshA subfamily. In terms of assembly, homodimer.

It carries out the reaction 1D-myo-inositol 3-phosphate + UDP-N-acetyl-alpha-D-glucosamine = 1D-myo-inositol 2-acetamido-2-deoxy-alpha-D-glucopyranoside 3-phosphate + UDP + H(+). In terms of biological role, catalyzes the transfer of a N-acetyl-glucosamine moiety to 1D-myo-inositol 3-phosphate to produce 1D-myo-inositol 2-acetamido-2-deoxy-glucopyranoside 3-phosphate in the mycothiol biosynthesis pathway. The sequence is that of D-inositol 3-phosphate glycosyltransferase from Corynebacterium glutamicum (strain R).